The following is a 407-amino-acid chain: [Pyruvate dehydrogenase (acetyl-transferring)] kinase isozyme 2, mitochondrial (407 aa).

The Histidine kinase domain maps to 135–364; the sequence is LEYKDTYGDD…DAVIYLKALS (230 aa). Residues tyrosine 215 and tyrosine 216 each carry the phosphotyrosine modification. Residues 251–258, aspartate 290, 309–310, and 325–330 contribute to the ATP site; these read ELFKNAMR, ST, and GFGYGL. Position 376 is an N6-succinyllysine (lysine 376).

Belongs to the PDK/BCKDK protein kinase family. In terms of assembly, homodimer, and heterodimer with PDK1. Interacts with the pyruvate dehydrogenase complex subunit DLAT, and is part of the multimeric pyruvate dehydrogenase complex that contains multiple copies of pyruvate dehydrogenase (E1), dihydrolipoamide acetyltransferase (DLAT, E2) and lipoamide dehydrogenase (DLD, E3). As to expression, detected in heart (at protein level). Highest level of expression in heart and skeletal muscle and the lowest in spleen and lung. Liver, kidney, brain and testis levels are intermediate.

It localises to the mitochondrion matrix. The catalysed reaction is L-seryl-[pyruvate dehydrogenase E1 alpha subunit] + ATP = O-phospho-L-seryl-[pyruvate dehydrogenase E1 alpha subunit] + ADP + H(+). Activity increases in response to increased acetyl-CoA and NADH levels and upon binding to the pyruvate dehydrogenase subunit DLAT. Inhibited by ADP and pyruvate; these compounds interfere with DLAT binding and thereby inhibit kinase activity. Inhibited by dichloroacetate. Inhibited by AZD7545; this compound interferes with DLAT binding and thereby inhibits kinase activity. Reactive oxygen species cause the formation of disulfide bonds, and thereby inhibit the enzyme. In terms of biological role, kinase that plays a key role in the regulation of glucose and fatty acid metabolism and homeostasis via phosphorylation of the pyruvate dehydrogenase subunits PDHA1 and PDHA2. This inhibits pyruvate dehydrogenase activity, and thereby regulates metabolite flux through the tricarboxylic acid cycle, down-regulates aerobic respiration and inhibits the formation of acetyl-coenzyme A from pyruvate. Inhibition of pyruvate dehydrogenase decreases glucose utilization and increases fat metabolism. Mediates cellular responses to insulin. Plays an important role in maintaining normal blood glucose levels and in metabolic adaptation to nutrient availability. Via its regulation of pyruvate dehydrogenase activity, plays an important role in maintaining normal blood pH and in preventing the accumulation of ketone bodies under starvation. Plays a role in the regulation of cell proliferation and in resistance to apoptosis under oxidative stress. Plays a role in p53/TP53-mediated apoptosis. This is [Pyruvate dehydrogenase (acetyl-transferring)] kinase isozyme 2, mitochondrial (Pdk2) from Rattus norvegicus (Rat).